The sequence spans 117 residues: Large ribosomal subunit protein uL18 (117 aa).

This sequence belongs to the universal ribosomal protein uL18 family. In terms of assembly, part of the 50S ribosomal subunit; part of the 5S rRNA/L5/L18/L25 subcomplex. Contacts the 5S and 23S rRNAs.

This is one of the proteins that bind and probably mediate the attachment of the 5S RNA into the large ribosomal subunit, where it forms part of the central protuberance. The polypeptide is Large ribosomal subunit protein uL18 (Pectobacterium carotovorum subsp. carotovorum (strain PC1)).